We begin with the raw amino-acid sequence, 208 residues long: Ribosomal RNA large subunit methyltransferase E (208 aa).

Positions 62, 64, 82, 98, and 123 each coordinate S-adenosyl-L-methionine. Lys-163 acts as the Proton acceptor in catalysis.

It belongs to the class I-like SAM-binding methyltransferase superfamily. RNA methyltransferase RlmE family.

The protein resides in the cytoplasm. It carries out the reaction uridine(2552) in 23S rRNA + S-adenosyl-L-methionine = 2'-O-methyluridine(2552) in 23S rRNA + S-adenosyl-L-homocysteine + H(+). Its function is as follows. Specifically methylates the uridine in position 2552 of 23S rRNA at the 2'-O position of the ribose in the fully assembled 50S ribosomal subunit. The chain is Ribosomal RNA large subunit methyltransferase E from Haemophilus ducreyi (strain 35000HP / ATCC 700724).